The following is a 417-amino-acid chain: NADH-quinone oxidoreductase subunit D (417 aa).

The protein belongs to the complex I 49 kDa subunit family. NDH-1 is composed of 14 different subunits. Subunits NuoB, C, D, E, F, and G constitute the peripheral sector of the complex.

Its subcellular location is the cell inner membrane. The enzyme catalyses a quinone + NADH + 5 H(+)(in) = a quinol + NAD(+) + 4 H(+)(out). NDH-1 shuttles electrons from NADH, via FMN and iron-sulfur (Fe-S) centers, to quinones in the respiratory chain. The immediate electron acceptor for the enzyme in this species is believed to be ubiquinone. Couples the redox reaction to proton translocation (for every two electrons transferred, four hydrogen ions are translocated across the cytoplasmic membrane), and thus conserves the redox energy in a proton gradient. The sequence is that of NADH-quinone oxidoreductase subunit D from Acidovorax sp. (strain JS42).